A 226-amino-acid polypeptide reads, in one-letter code: Thioredoxin domain-containing protein 9 (226 aa).

Positions 75–180 constitute a Thioredoxin domain; sequence EIGSERDFFQ…TTETLEWRLG (106 aa). A phosphoserine mark is found at Ser188, Ser221, and Ser223.

In terms of assembly, forms ternary complexes with the chaperonin TCP1 complex, spanning the cylindrical chaperonin cavity and contacting at least 2 subunits. In terms of tissue distribution, expressed in testis, liver, heart, kidney, brain, spleen and lung.

The protein localises to the cytoplasm. It is found in the nucleus. Its subcellular location is the cytoskeleton. It localises to the microtubule organizing center. The protein resides in the centrosome. The protein localises to the midbody. Significantly diminishes the chaperonin TCP1 complex ATPase activity, thus negatively impacts protein folding, including that of actin or tubulin. The sequence is that of Thioredoxin domain-containing protein 9 (Txndc9) from Mus musculus (Mouse).